A 256-amino-acid polypeptide reads, in one-letter code: Protein crossbronx-like (256 aa).

The UBC core domain maps to 17 to 179 (NQGYQVLAEY…AKASIVWSWK (163 aa)).

The protein belongs to the ubiquitin-conjugating enzyme family. FTS subfamily.

The chain is Protein crossbronx-like from Drosophila mojavensis (Fruit fly).